Reading from the N-terminus, the 286-residue chain is Probable protein VP2 (286 aa).

Disordered stretches follow at residues 67–108 and 184–286; these read LPAA…GPED and QAAR…GGGI. A compositionally biased stretch (basic residues) spans 222–241; it reads GKTRSRRKAGRKAQRKRRRP. Over residues 242-265 the composition is skewed to low complexity; the sequence is SPSSSSSSCSNSESWESNSDSCST.

Phosphorylated at C-terminal serines.

The chain is Probable protein VP2 from Homo sapiens (Human).